Reading from the N-terminus, the 186-residue chain is Casparian strip membrane protein 6 (186 aa).

The Cytoplasmic portion of the chain corresponds to 1-23; sequence MKAGPIELGEGKSSAPKAAVNRG. A helical transmembrane segment spans residues 24 to 44; sequence VAILDFILRILAFIGTLGSAI. The Extracellular segment spans residues 45–73; that stretch reads SMATTNETLPFFTQFIRFRAEYDDLPTFT. An N-linked (GlcNAc...) asparagine glycan is attached at N50. A helical membrane pass occupies residues 74–94; it reads FFVVANGVVSAYLLFSLPFSI. Residues 95–106 lie on the Cytoplasmic side of the membrane; that stretch reads FNIVRSKAQNSR. The chain crosses the membrane as a helical span at residues 107–127; the sequence is ILLIILDTAMLGLLSAGASAA. Residues 128 to 160 are Extracellular-facing; it reads AAIVYLAHQGNVRTNWSAICQQFNSFCERISGS. N142 is a glycosylation site (N-linked (GlcNAc...) asparagine). Residues 161 to 181 traverse the membrane as a helical segment; that stretch reads LIGSFIGVVVFILLISLSAVA. Topologically, residues 182–186 are cytoplasmic; it reads LSRHK.

Belongs to the Casparian strip membrane proteins (CASP) family. As to quaternary structure, homodimer and heterodimers.

The protein resides in the cell membrane. Its function is as follows. Regulates membrane-cell wall junctions and localized cell wall deposition. Required for establishment of the Casparian strip membrane domain (CSD) and the subsequent formation of Casparian strips, a cell wall modification of the root endodermis that determines an apoplastic barrier between the intraorganismal apoplasm and the extraorganismal apoplasm and prevents lateral diffusion. This is Casparian strip membrane protein 6 from Populus trichocarpa (Western balsam poplar).